A 244-amino-acid polypeptide reads, in one-letter code: 1-(5-phosphoribosyl)-5-[(5-phosphoribosylamino)methylideneamino] imidazole-4-carboxamide isomerase (244 aa).

The Proton acceptor role is filled by D10. The active-site Proton donor is the D132.

The protein belongs to the HisA/HisF family.

The protein localises to the cytoplasm. It catalyses the reaction 1-(5-phospho-beta-D-ribosyl)-5-[(5-phospho-beta-D-ribosylamino)methylideneamino]imidazole-4-carboxamide = 5-[(5-phospho-1-deoxy-D-ribulos-1-ylimino)methylamino]-1-(5-phospho-beta-D-ribosyl)imidazole-4-carboxamide. It participates in amino-acid biosynthesis; L-histidine biosynthesis; L-histidine from 5-phospho-alpha-D-ribose 1-diphosphate: step 4/9. In Stenotrophomonas maltophilia (strain R551-3), this protein is 1-(5-phosphoribosyl)-5-[(5-phosphoribosylamino)methylideneamino] imidazole-4-carboxamide isomerase.